The chain runs to 664 residues: Transketolase 1 (664 aa).

H26 contacts substrate. Residues H66 and G114 to L116 contribute to the thiamine diphosphate site. Residue D155 participates in Mg(2+) binding. Positions 156 and 185 each coordinate thiamine diphosphate. Mg(2+)-binding residues include N185 and I187. H260, R357, and S384 together coordinate substrate. Position 260 (H260) interacts with thiamine diphosphate. E411 acts as the Proton donor in catalysis. F437 is a thiamine diphosphate binding site. The substrate site is built by H461, D469, and R520.

This sequence belongs to the transketolase family. As to quaternary structure, homodimer. Mg(2+) is required as a cofactor. The cofactor is Ca(2+). Mn(2+) serves as cofactor. It depends on Co(2+) as a cofactor. Requires thiamine diphosphate as cofactor.

It carries out the reaction D-sedoheptulose 7-phosphate + D-glyceraldehyde 3-phosphate = aldehydo-D-ribose 5-phosphate + D-xylulose 5-phosphate. Catalyzes the transfer of a two-carbon ketol group from a ketose donor to an aldose acceptor, via a covalent intermediate with the cofactor thiamine pyrophosphate. The chain is Transketolase 1 (tkt1) from Vibrio vulnificus (strain CMCP6).